The chain runs to 122 residues: Large ribosomal subunit protein uL14 (122 aa).

Belongs to the universal ribosomal protein uL14 family. Part of the 50S ribosomal subunit. Forms a cluster with proteins L3 and L19. In the 70S ribosome, L14 and L19 interact and together make contacts with the 16S rRNA in bridges B5 and B8.

In terms of biological role, binds to 23S rRNA. Forms part of two intersubunit bridges in the 70S ribosome. This Lactobacillus delbrueckii subsp. bulgaricus (strain ATCC 11842 / DSM 20081 / BCRC 10696 / JCM 1002 / NBRC 13953 / NCIMB 11778 / NCTC 12712 / WDCM 00102 / Lb 14) protein is Large ribosomal subunit protein uL14.